A 215-amino-acid chain; its full sequence is Peroxiredoxin (215 aa).

The region spanning 3–158 (PLLGDNFPEI…ILRAVKALQV (156 aa)) is the Thioredoxin domain. Residue Cys45 is the Cysteine sulfenic acid (-SOH) intermediate of the active site. Substrate is bound at residue Arg121. Cys205 and Cys211 form a disulfide bridge.

Belongs to the peroxiredoxin family. Prx6 subfamily. In terms of assembly, homodecamer. Pentamer of dimers that assemble into a ring structure.

It is found in the cytoplasm. It carries out the reaction a hydroperoxide + [thioredoxin]-dithiol = an alcohol + [thioredoxin]-disulfide + H2O. Thiol-specific peroxidase that catalyzes the reduction of hydrogen peroxide and organic hydroperoxides to water and alcohols, respectively. Plays a role in cell protection against oxidative stress by detoxifying peroxides. This is Peroxiredoxin from Archaeoglobus fulgidus (strain ATCC 49558 / DSM 4304 / JCM 9628 / NBRC 100126 / VC-16).